The primary structure comprises 190 residues: Dynein axonemal light chain 1 (190 aa).

A2 is modified (N-acetylalanine). 4 LRR repeats span residues 49-70 (NCEKLSLSTNCIEKIANLNGLK), 71-92 (NLRILSLGRNNIKNLNGLEAVG), 94-115 (TLEELWISYNFIEKLKGIHVMK), and 116-137 (KLKILYMSNNLVKDWAEFVKLA). Phosphoserine is present on S56. Residues 150–190 (NPLEEKHSAEGNWVEEATKRVPKLKKLDGTPVIKEDEEEDN) form the LRRCT domain.

This sequence belongs to the dynein light chain LC1-type family. In terms of assembly, interacts with ZMYND10 (via C-terminus). Interacts with DNAH5, a outer arm dynein heavy chain. Interacts with tubulin located within the A-tubule of the outer doublets in a ATP-independent manner.

Its subcellular location is the cytoplasm. It localises to the cytoskeleton. It is found in the cilium axoneme. Part of the multisubunit axonemal ATPase complexes that generate the force for cilia motility and govern beat frequency. Component of the outer arm dynein (ODA). May be involved in a mechanosensory feedback mechanism controlling ODA activity based on external conformational cues by tethering the outer arm dynein heavy chain (DNAH5) to the microtubule within the axoneme. Important for ciliary function in the airways and for the function of the cilia that produce the nodal flow essential for the determination of the left-right asymmetry. In Bos taurus (Bovine), this protein is Dynein axonemal light chain 1 (DNAL1).